Reading from the N-terminus, the 85-residue chain is U4-theraphotoxin-Hhn1a (85 aa).

Positions 1–22 (MKVTLIAILTCAAVLVLHTTAE) are cleaved as a signal peptide. The propeptide occupies 23-48 (EELEAESQLMEVGMPDTELAAVDEER). 3 cysteine pairs are disulfide-bonded: C52/C66, C56/C77, and C71/C82.

It belongs to the neurotoxin 12 (Hwtx-2) family. 02 (Hwtx-2) subfamily. In terms of assembly, monomer. As to expression, expressed by the venom gland.

The protein resides in the secreted. Functionally, neurotoxin active on both insects and mammals. This Cyriopagopus hainanus (Chinese bird spider) protein is U4-theraphotoxin-Hhn1a.